A 52-amino-acid polypeptide reads, in one-letter code: UPF0181 protein HI_1434.2 (52 aa).

This sequence belongs to the UPF0181 family.

The sequence is that of UPF0181 protein HI_1434.2 from Haemophilus influenzae (strain ATCC 51907 / DSM 11121 / KW20 / Rd).